A 776-amino-acid polypeptide reads, in one-letter code: DNA ligase (776 aa).

NAD(+) is bound by residues 31-35, 80-81, and glutamate 112; these read DAEYD and SL. Catalysis depends on lysine 114, which acts as the N6-AMP-lysine intermediate. 4 residues coordinate NAD(+): arginine 135, glutamate 172, lysine 288, and lysine 312. Residues cysteine 406, cysteine 409, cysteine 436, and cysteine 442 each coordinate Zn(2+). The 84-residue stretch at 693–776 folds into the BRCT domain; sequence AEGLPLAGQT…VFLDEQGIAI (84 aa).

It belongs to the NAD-dependent DNA ligase family. LigA subfamily. Mg(2+) is required as a cofactor. The cofactor is Mn(2+).

The enzyme catalyses NAD(+) + (deoxyribonucleotide)n-3'-hydroxyl + 5'-phospho-(deoxyribonucleotide)m = (deoxyribonucleotide)n+m + AMP + beta-nicotinamide D-nucleotide.. DNA ligase that catalyzes the formation of phosphodiester linkages between 5'-phosphoryl and 3'-hydroxyl groups in double-stranded DNA using NAD as a coenzyme and as the energy source for the reaction. It is essential for DNA replication and repair of damaged DNA. This chain is DNA ligase, found in Pseudomonas putida (strain W619).